The chain runs to 97 residues: Putative defensin-like protein 240 (97 aa).

The first 23 residues, methionine 1–glycine 23, serve as a signal peptide directing secretion. 4 disulfides stabilise this stretch: cysteine 29–cysteine 88, cysteine 39–cysteine 69, cysteine 47–cysteine 85, and cysteine 67–cysteine 87.

The protein belongs to the DEFL family.

It is found in the secreted. This is Putative defensin-like protein 240 (SCRL18) from Arabidopsis thaliana (Mouse-ear cress).